Reading from the N-terminus, the 39-residue chain is Photosystem I reaction center subunit IX (39 aa).

Residues Phe-7–Ile-27 traverse the membrane as a helical segment.

Belongs to the PsaJ family.

It localises to the cellular thylakoid membrane. Its function is as follows. May help in the organization of the PsaE and PsaF subunits. This Synechococcus sp. (strain JA-3-3Ab) (Cyanobacteria bacterium Yellowstone A-Prime) protein is Photosystem I reaction center subunit IX.